The sequence spans 91 residues: Probable Fe(2+)-trafficking protein (91 aa).

It belongs to the Fe(2+)-trafficking protein family.

Its function is as follows. Could be a mediator in iron transactions between iron acquisition and iron-requiring processes, such as synthesis and/or repair of Fe-S clusters in biosynthetic enzymes. The polypeptide is Probable Fe(2+)-trafficking protein (Burkholderia ambifaria (strain MC40-6)).